Here is a 131-residue protein sequence, read N- to C-terminus: Transcription antitermination protein NusB (131 aa).

Belongs to the NusB family.

Its function is as follows. Involved in transcription antitermination. Required for transcription of ribosomal RNA (rRNA) genes. Binds specifically to the boxA antiterminator sequence of the ribosomal RNA (rrn) operons. In Campylobacter fetus subsp. fetus (strain 82-40), this protein is Transcription antitermination protein NusB.